The following is a 352-amino-acid chain: Histidinol-phosphate aminotransferase (352 aa).

At K216 the chain carries N6-(pyridoxal phosphate)lysine.

This sequence belongs to the class-II pyridoxal-phosphate-dependent aminotransferase family. Histidinol-phosphate aminotransferase subfamily. Requires pyridoxal 5'-phosphate as cofactor.

The catalysed reaction is L-histidinol phosphate + 2-oxoglutarate = 3-(imidazol-4-yl)-2-oxopropyl phosphate + L-glutamate. It functions in the pathway amino-acid biosynthesis; L-histidine biosynthesis; L-histidine from 5-phospho-alpha-D-ribose 1-diphosphate: step 7/9. This chain is Histidinol-phosphate aminotransferase, found in Methanoculleus marisnigri (strain ATCC 35101 / DSM 1498 / JR1).